Reading from the N-terminus, the 104-residue chain is Pole-localizer protein TmaR (104 aa).

2 coiled-coil regions span residues 7 to 34 (IVNQARRKNKLKRELLDNEKKVRDNRKR) and 76 to 96 (SAEISKARRDISRRIRELTEE).

It belongs to the pole-localizer TmaR family.

It is found in the cytoplasm. Pole-localizer protein involved in the regulation of several cellular processes. The protein is Pole-localizer protein TmaR of Vibrio campbellii (strain ATCC BAA-1116).